Here is a 296-residue protein sequence, read N- to C-terminus: Transmembrane O-methyltransferase (296 aa).

Residues Val-36–Val-56 traverse the membrane as a helical segment. Residues Glu-142, Gly-144 to Thr-145, Ser-150, Glu-168, and Ser-198 contribute to the S-adenosyl-L-methionine site.

This sequence belongs to the class I-like SAM-binding methyltransferase superfamily. Cation-dependent O-methyltransferase family. As to quaternary structure, interacts with LHFPL5, PCDH15, TMC1, TMC2 and TMIE. Interacts directly with TMC1. The interaction of TOMT with TMC1 and TMC2 is required for the transportation of TMC1/2 into the stereocilia of hair cells.

The protein localises to the membrane. It is found in the cytoplasm. It localises to the endoplasmic reticulum. It carries out the reaction a catechol + S-adenosyl-L-methionine = a guaiacol + S-adenosyl-L-homocysteine + H(+). Its function is as follows. Catalyzes the O-methylation, and thereby the inactivation, of catecholamine neurotransmitters and catechol hormones. Required for auditory function. Component of the cochlear hair cell's mechanotransduction (MET) machinery. Involved in the assembly of the asymmetric tip-link MET complex. Required for transportation of TMC1 and TMC2 proteins into the mechanically sensitive stereocilia of the hair cells. The function in MET is independent of the enzymatic activity. The polypeptide is Transmembrane O-methyltransferase (Macaca mulatta (Rhesus macaque)).